We begin with the raw amino-acid sequence, 505 residues long: Deoxyguanosinetriphosphate triphosphohydrolase (505 aa).

The 208-residue stretch at 66–273 (RLTHSMEVQQ…MEAADDISYC (208 aa)) folds into the HD domain.

It belongs to the dGTPase family. Type 1 subfamily. In terms of assembly, homotetramer. Mg(2+) is required as a cofactor.

The enzyme catalyses dGTP + H2O = 2'-deoxyguanosine + triphosphate + H(+). DGTPase preferentially hydrolyzes dGTP over the other canonical NTPs. The protein is Deoxyguanosinetriphosphate triphosphohydrolase of Salmonella paratyphi A (strain AKU_12601).